The chain runs to 305 residues: Protein MFI (305 aa).

In terms of assembly, can homodimerize. Interacts with MFF; the interaction inhibits MFF interaction with DNM1L.

The protein localises to the cytoplasm. It localises to the cytosol. Its subcellular location is the mitochondrion outer membrane. Acts as an inhibitor of mitochondrial fission. Interacts with MFF and prevents DNM1L recruitment to mitochondria, promoting a more fused mitochondrial network. The chain is Protein MFI from Rattus norvegicus (Rat).